The following is a 231-amino-acid chain: Protein OPG061 (231 aa).

Belongs to the orthopoxvirus OPG058 family.

The protein resides in the host nucleus. The protein localises to the host nucleolus. In Homo sapiens (Human), this protein is Protein OPG061 (OPG061).